A 300-amino-acid polypeptide reads, in one-letter code: GTPase Era (300 aa).

Residues 6–173 enclose the Era-type G domain; that stretch reads HSGFVAILGR…IESLVNTLPE (168 aa). The segment at 14 to 21 is G1; it reads GRPNVGKS. Residue 14-21 coordinates GTP; the sequence is GRPNVGKS. Residues 40–44 form a G2 region; the sequence is QTTRN. The interval 61-64 is G3; the sequence is DTPG. Residues 61–65 and 123–126 contribute to the GTP site; these read DTPGI and NKID. A G4 region spans residues 123–126; sequence NKID. The interval 152-154 is G5; the sequence is ISA. A KH type-2 domain is found at 204–281; the sequence is TREEVPHSVA…YLELWVKVQP (78 aa).

The protein belongs to the TRAFAC class TrmE-Era-EngA-EngB-Septin-like GTPase superfamily. Era GTPase family. Monomer.

It localises to the cytoplasm. Its subcellular location is the cell membrane. In terms of biological role, an essential GTPase that binds both GDP and GTP, with rapid nucleotide exchange. Plays a role in 16S rRNA processing and 30S ribosomal subunit biogenesis and possibly also in cell cycle regulation and energy metabolism. This Ligilactobacillus salivarius (strain UCC118) (Lactobacillus salivarius) protein is GTPase Era.